A 392-amino-acid chain; its full sequence is General receptor for phosphoinositides 1-associated scaffold protein (392 aa).

The segment at 1 to 50 is disordered; that stretch reads MTLRRLRKLQQKEEATAAPDPAGRAPDSEAARAAPLPSGPPAAAAPPGAP. Residues 37 to 49 show a composition bias toward pro residues; the sequence is PSGPPAAAAPPGA. A Phosphothreonine modification is found at Thr-76. Ser-93 is modified (phosphoserine). The region spanning 100 to 189 is the PDZ domain; it reads VLTLEKGDNQ…VLRLETLYGT (90 aa). Positions 180 to 257 are interaction with PSCD3; that stretch reads VLRLETLYGT…GAGLLPGSLP (78 aa). The residue at position 236 (Tyr-236) is a Phosphotyrosine. At Arg-269 the chain carries Omega-N-methylarginine. The disordered stretch occupies residues 294–315; the sequence is PQALPPPPPPARALGPSSAETP. Ser-384 carries the phosphoserine modification.

As to quaternary structure, heteromer. Composed of TAMALIN, CYTH2 and at least one GRM1. Also interacts with GRM2, GRM3 and GRM5. Interacts with CYTH3. In terms of tissue distribution, highly expressed in brain, heart and lung, and to a lower extent in embryo, kidney and ovary.

Its subcellular location is the cytoplasm. It is found in the perinuclear region. It localises to the cell membrane. The protein localises to the postsynaptic cell membrane. Functionally, plays a role in intracellular trafficking and contributes to the macromolecular organization of group 1 metabotropic glutamate receptors (mGluRs) at synapses. In Mus musculus (Mouse), this protein is General receptor for phosphoinositides 1-associated scaffold protein.